A 239-amino-acid polypeptide reads, in one-letter code: Uridylate kinase (239 aa).

Residue K10–G13 coordinates ATP. G53 lines the UMP pocket. 2 residues coordinate ATP: G54 and R58. UMP is bound by residues D73 and T135–T142. Positions 163, 169, and 172 each coordinate ATP.

The protein belongs to the UMP kinase family. In terms of assembly, homohexamer.

It is found in the cytoplasm. The enzyme catalyses UMP + ATP = UDP + ADP. Its pathway is pyrimidine metabolism; CTP biosynthesis via de novo pathway; UDP from UMP (UMPK route): step 1/1. Inhibited by UTP. Catalyzes the reversible phosphorylation of UMP to UDP. The polypeptide is Uridylate kinase (Mycoplasmopsis synoviae (strain 53) (Mycoplasma synoviae)).